The chain runs to 302 residues: m7GpppN-mRNA hydrolase NUDT17 (302 aa).

The Nudix hydrolase domain maps to 89–237 (GRGVDLGVAV…DGTETPKHLP (149 aa)). Positions 128 to 149 (GHVEPDEELLDGGLRELWEESG) match the Nudix box motif. Positions 143 and 147 each coordinate Mg(2+).

The protein belongs to the Nudix hydrolase family. Mg(2+) serves as cofactor. Mn(2+) is required as a cofactor.

The catalysed reaction is a 5'-end (N(7)-methyl 5'-triphosphoguanosine)-ribonucleoside in mRNA + H2O = N(7)-methyl-GDP + a 5'-end phospho-ribonucleoside in mRNA + 2 H(+). Functionally, acts as a decapping enzyme capable of hydrolyzing monomethylated capped RNAs (in vitro). Hydrolyzes monomethylated capped RNA after alpha and beta phosphates to form N(7)-methyl-GDP. Shows low activity towards unmethylated capped RNA. The chain is m7GpppN-mRNA hydrolase NUDT17 (NUDT17) from Bos taurus (Bovine).